Reading from the N-terminus, the 191-residue chain is Ribosome maturation factor RimM (191 aa).

The region spanning 102 to 185 (EEEYHVSQLI…RIEINPPKGL (84 aa)) is the PRC barrel domain.

Belongs to the RimM family. In terms of assembly, binds ribosomal protein uS19.

Its subcellular location is the cytoplasm. An accessory protein needed during the final step in the assembly of 30S ribosomal subunit, possibly for assembly of the head region. Essential for efficient processing of 16S rRNA. May be needed both before and after RbfA during the maturation of 16S rRNA. It has affinity for free ribosomal 30S subunits but not for 70S ribosomes. In Crocosphaera subtropica (strain ATCC 51142 / BH68) (Cyanothece sp. (strain ATCC 51142)), this protein is Ribosome maturation factor RimM.